A 447-amino-acid polypeptide reads, in one-letter code: Ribulose bisphosphate carboxylase large chain (447 aa).

2 residues coordinate substrate: N89 and T139. K141 serves as the catalytic Proton acceptor. A substrate-binding site is contributed by K143. K167, D169, and E170 together coordinate Mg(2+). Residue K167 is modified to N6-carboxylysine. H260 (proton acceptor) is an active-site residue. Substrate is bound by residues R261, H293, and S345.

The protein belongs to the RuBisCO large chain family. Type I subfamily. As to quaternary structure, heterohexadecamer of 8 large chains and 8 small chains; disulfide-linked. The disulfide link is formed within the large subunit homodimers. It depends on Mg(2+) as a cofactor. Post-translationally, the disulfide bond which can form in the large chain dimeric partners within the hexadecamer appears to be associated with oxidative stress and protein turnover.

Its subcellular location is the plastid. It is found in the chloroplast. It carries out the reaction 2 (2R)-3-phosphoglycerate + 2 H(+) = D-ribulose 1,5-bisphosphate + CO2 + H2O. The catalysed reaction is D-ribulose 1,5-bisphosphate + O2 = 2-phosphoglycolate + (2R)-3-phosphoglycerate + 2 H(+). RuBisCO catalyzes two reactions: the carboxylation of D-ribulose 1,5-bisphosphate, the primary event in carbon dioxide fixation, as well as the oxidative fragmentation of the pentose substrate in the photorespiration process. Both reactions occur simultaneously and in competition at the same active site. In Ligustrum vulgare (Common privet), this protein is Ribulose bisphosphate carboxylase large chain.